We begin with the raw amino-acid sequence, 213 residues long: Charged multivesicular body protein 2b (213 aa).

Ala-2 bears the N-acetylalanine mark. Positions 25 to 55 form a coiled coil; sequence QRAIIRDRAALEKQEKQLELEIKKMAKIGNK. A disordered region spans residues 178–202; the sequence is MAKAPSAARSLPSASTSKSTISDEE. Residues 179–194 are compositionally biased toward low complexity; it reads AKAPSAARSLPSASTS. Phosphoserine is present on Ser-199. The MIT-interacting motif motif lies at 201–211; sequence EEIERQLKALG.

Belongs to the SNF7 family. Probable core component of the endosomal sorting required for transport complex III (ESCRT-III). ESCRT-III components are thought to multimerize to form a flat lattice on the perimeter membrane of the endosome. Several assembly forms of ESCRT-III may exist that interact and act sequentially. Interacts with CHMP2A. Interacts with VPS4A. Interacts with VPS4B; the interaction is direct.

The protein localises to the cytoplasm. The protein resides in the cytosol. It localises to the late endosome membrane. Its function is as follows. Probable core component of the endosomal sorting required for transport complex III (ESCRT-III) which is involved in multivesicular bodies (MVBs) formation and sorting of endosomal cargo proteins into MVBs. MVBs contain intraluminal vesicles (ILVs) that are generated by invagination and scission from the limiting membrane of the endosome and mostly are delivered to lysosomes enabling degradation of membrane proteins, such as stimulated growth factor receptors, lysosomal enzymes and lipids. The MVB pathway appears to require the sequential function of ESCRT-O, -I,-II and -III complexes. ESCRT-III proteins mostly dissociate from the invaginating membrane before the ILV is released. The ESCRT machinery also functions in topologically equivalent membrane fission events, such as the terminal stages of cytokinesis and the budding of enveloped viruses (lentiviruses). ESCRT-III proteins are believed to mediate the necessary vesicle extrusion and/or membrane fission activities, possibly in conjunction with the AAA ATPase VPS4. The sequence is that of Charged multivesicular body protein 2b (CHMP2B) from Bos taurus (Bovine).